The following is a 442-amino-acid chain: tRNA modification GTPase MnmE (442 aa).

The (6S)-5-formyl-5,6,7,8-tetrahydrofolate site is built by Arg-24, Glu-84, and Arg-124. Residues 218–366 (GARVALFGPV…LRDDMLGRLW (149 aa)) enclose the TrmE-type G domain. Residues 228–233 (NAGKST), 247–253 (DDEPGTT), and 272–275 (DTAG) contribute to the GTP site. Residues Ser-232 and Thr-253 each contribute to the Mg(2+) site. Lys-442 is a binding site for (6S)-5-formyl-5,6,7,8-tetrahydrofolate.

The protein belongs to the TRAFAC class TrmE-Era-EngA-EngB-Septin-like GTPase superfamily. TrmE GTPase family. In terms of assembly, homodimer. Heterotetramer of two MnmE and two MnmG subunits. K(+) serves as cofactor.

The protein localises to the cytoplasm. Functionally, exhibits a very high intrinsic GTPase hydrolysis rate. Involved in the addition of a carboxymethylaminomethyl (cmnm) group at the wobble position (U34) of certain tRNAs, forming tRNA-cmnm(5)s(2)U34. The sequence is that of tRNA modification GTPase MnmE from Myxococcus xanthus (strain DK1622).